Here is a 76-residue protein sequence, read N- to C-terminus: Putative snRNP Sm-like protein (76 aa).

Positions 4–76 constitute a Sm domain; the sequence is RPLDVIHKSL…VLALSPVELE (73 aa).

The protein belongs to the snRNP Sm proteins family.

The sequence is that of Putative snRNP Sm-like protein from Thermococcus kodakarensis (strain ATCC BAA-918 / JCM 12380 / KOD1) (Pyrococcus kodakaraensis (strain KOD1)).